Consider the following 541-residue polypeptide: MAKIIAFDEEARRGLERGLNALADAVKVTLGPKGRNVVLEKKWGAPTITNDGVSIAKEIELEDPYEKIGAELVKEVAKKTDDVAGDGTTTATVLAQALVREGLRNVAAGANPLGLKRGIEKAVEAVTVRLLETAKEIDTKEQIAATAGISAGDPSIGELIAEAMDKVGKEGVITVEESNTFGLQLELTEGMRFDKGYISAYFATDPERQEAVLEDAYILLVSSKISTVKDLLPLLEKVIQSGKPLVIIAEDVEGEALSTLVVNKIRGTFKSVAVKAPGFGDRRKAQLADIAILTGGEVISEEVGLSLETAGLELLGQARKVVITKDETTIVEGAGDPEAIAGRVAQIRAEIENSDSDYDREKLQERLAKLAGGVAVIKAGAATEVELKERKHRIEDAVRNAKAAVEEGIVAGGGVALLQSAPALDDLKLEGDEATGANIVRVALEAPLKQIAFNAGLEPGVVAEKVRNLPAGHGLNASTNEYGDLLEAGINDPVKVTRSALQNAASIAALFLTTEAVVADKPEKAGAPVGDPTGGMGGMDF.

ATP is bound by residues 29-32, 86-90, G413, and D492; these read TLGP and DGTTT.

The protein belongs to the chaperonin (HSP60) family. As to quaternary structure, forms a cylinder of 14 subunits composed of two heptameric rings stacked back-to-back. Interacts with the co-chaperonin GroES.

The protein resides in the cytoplasm. The catalysed reaction is ATP + H2O + a folded polypeptide = ADP + phosphate + an unfolded polypeptide.. Functionally, together with its co-chaperonin GroES, plays an essential role in assisting protein folding. The GroEL-GroES system forms a nano-cage that allows encapsulation of the non-native substrate proteins and provides a physical environment optimized to promote and accelerate protein folding. The protein is Chaperonin GroEL 1 of Rhodococcus jostii (strain RHA1).